Here is a 732-residue protein sequence, read N- to C-terminus: Catalase-peroxidase (732 aa).

The disordered stretch occupies residues Met1–Asn20. A cross-link (tryptophyl-tyrosyl-methioninium (Trp-Tyr) (with M-246)) is located at residues Trp92 to Tyr220. His93 serves as the catalytic Proton acceptor. Residues Tyr220 to Met246 constitute a cross-link (tryptophyl-tyrosyl-methioninium (Tyr-Met) (with W-92)). His261 contacts heme b.

This sequence belongs to the peroxidase family. Peroxidase/catalase subfamily. As to quaternary structure, homodimer or homotetramer. Heme b serves as cofactor. Post-translationally, formation of the three residue Trp-Tyr-Met cross-link is important for the catalase, but not the peroxidase activity of the enzyme.

The enzyme catalyses H2O2 + AH2 = A + 2 H2O. It carries out the reaction 2 H2O2 = O2 + 2 H2O. Bifunctional enzyme with both catalase and broad-spectrum peroxidase activity. In Desulfosudis oleivorans (strain DSM 6200 / JCM 39069 / Hxd3) (Desulfococcus oleovorans), this protein is Catalase-peroxidase.